The primary structure comprises 459 residues: Type I restriction enzyme HindI specificity subunit (459 aa).

Belongs to the type-I restriction system S methylase family. As to quaternary structure, the type I restriction/modification system is composed of three polypeptides R, M and S; the restriction enzyme has stoichiometry R(2)M(2)S(1) while the methyltransferase is M(2)S(1).

Functionally, the specificity (S) subunit of a type I restriction enzyme; this subunit dictates DNA sequence specificity. The M and S subunits together form a methyltransferase (MTase) that methylates adenosines in the sequence 5'-RAACN(5)TAG-3'. Methylation protects against cleavage by HindI. In the presence of the R subunit the complex can also act as an endonuclease, binding to the same target sequence but cutting the DNA some distance from this site. Whether the DNA is cut or modified depends on the methylation state of the target sequence. When the target site is unmodified, the DNA is cut. When the target site is hemimethylated, the complex acts as a maintenance MTase modifying the DNA so that both strands become methylated. After locating a non-methylated recognition site, the enzyme complex serves as a molecular motor that translocates DNA in an ATP-dependent manner until a collision occurs that triggers cleavage. This is Type I restriction enzyme HindI specificity subunit from Haemophilus influenzae (strain ATCC 51907 / DSM 11121 / KW20 / Rd).